The chain runs to 251 residues: MKKAGLLFLVMIVIAVVAAGIGYWKLTGEESDTLRKIVLEQCLPNQQENQNPSPCAEVKPNAGYVVLKDRHGPLQYLLMPTYRINGTESPLLTDPSTPNFFWLAWQARDFMSQKYGQPVPDRAVSLAINSRTGRTQNHFHIHISCIRPDVREQLDNNLANISSRWLPMPGGLRGHEYLARRVTESELVQRSPFMMLAEEVPEAREHMGSYGLAMVRQSDNSFVLLATQRNLLTLNRASAEEIQDHQCEILR.

Residues A4–W24 traverse the membrane as a helical segment.

The protein belongs to the Cdh family.

It localises to the cell inner membrane. The enzyme catalyses a CDP-1,2-diacyl-sn-glycerol + H2O = a 1,2-diacyl-sn-glycero-3-phosphate + CMP + 2 H(+). It functions in the pathway phospholipid metabolism; CDP-diacylglycerol degradation; phosphatidate from CDP-diacylglycerol: step 1/1. The sequence is that of CDP-diacylglycerol pyrophosphatase from Escherichia coli O81 (strain ED1a).